A 311-amino-acid chain; its full sequence is Mediator of RNA polymerase II transcription subunit 27-B (311 aa).

Belongs to the Mediator complex subunit 27 family. As to quaternary structure, component of the Mediator complex.

The protein resides in the nucleus. Functionally, component of the Mediator complex, a coactivator involved in the regulated transcription of nearly all RNA polymerase II-dependent genes. Mediator functions as a bridge to convey information from gene-specific regulatory proteins to the basal RNA polymerase II transcription machinery. Mediator is recruited to promoters by direct interactions with regulatory proteins and serves as a scaffold for the assembly of a functional preinitiation complex with RNA polymerase II and the general transcription factors. This chain is Mediator of RNA polymerase II transcription subunit 27-B (med27-b), found in Xenopus laevis (African clawed frog).